The following is a 449-amino-acid chain: Interferon-related developmental regulator 1 (449 aa).

The segment covering 1 to 10 (MPKNKKRNAP) has biased composition (basic residues). Residues 1–41 (MPKNKKRNAPHRGGGGGGGSGAATSAATTGGPHRTVQPFSD) are disordered. The span at 12 to 21 (RGGGGGGGSG) shows a compositional bias: gly residues. A compositionally biased stretch (low complexity) spans 22 to 31 (AATSAATTGG).

Belongs to the IFRD family. As to quaternary structure, interacts with PSIP1/LEDGF. Expressed at high levels in the embryonic brain in the period related to neuroblast proliferation and differentiation.

It localises to the cytoplasm. The protein resides in the cell membrane. Its subcellular location is the nucleus. In terms of biological role, probably participates in neurogenesis. Could play a role in regulating gene activity in the proliferative and/or differentiative pathways induced by NGF. In Rattus norvegicus (Rat), this protein is Interferon-related developmental regulator 1 (Ifrd1).